The chain runs to 337 residues: Heme A synthase (337 aa).

7 consecutive transmembrane segments (helical) span residues 3-23, 94-114, 120-140, 154-174, 191-211, 248-268, and 289-309; these read LARWLWVVAGLVVTIVAIGGI, VIGLAFLLPMMWFWIRGMIPA, LLALFALICGQGALGWYMVAS, LSAHLLTALFLLAGLVWTALD, GVAWMASIILFIQILLGAWVA, FLLHFLHRWWAWVAVIALVVL, and TMVVLGIATVLSEVSLWIAVA. Heme is bound at residue H254. H310 provides a ligand contact to heme. A helical membrane pass occupies residues 311 to 331; it reads QLTGALLVISTAWAAHAIGTA.

Belongs to the COX15/CtaA family. Type 2 subfamily. In terms of assembly, interacts with CtaB. Requires heme b as cofactor.

Its subcellular location is the cell membrane. It carries out the reaction Fe(II)-heme o + 2 A + H2O = Fe(II)-heme a + 2 AH2. The protein operates within porphyrin-containing compound metabolism; heme A biosynthesis; heme A from heme O: step 1/1. In terms of biological role, catalyzes the conversion of heme O to heme A by two successive hydroxylations of the methyl group at C8. The first hydroxylation forms heme I, the second hydroxylation results in an unstable dihydroxymethyl group, which spontaneously dehydrates, resulting in the formyl group of heme A. The chain is Heme A synthase from Erythrobacter litoralis (strain HTCC2594).